Consider the following 155-residue polypeptide: Large ribosomal subunit protein eL24 (155 aa).

Residues 98–129 (PEVRKAKRDDKAKADKEKKKADKAARKAEKAK) show a composition bias toward basic and acidic residues. A disordered region spans residues 98–155 (PEVRKAKRDDKAKADKEKKKADKAARKAEKAKLAAAQGSKVSKQQAKGAFQKVAATSR).

It belongs to the eukaryotic ribosomal protein eL24 family.

The sequence is that of Large ribosomal subunit protein eL24 (RPL24) from Candida glabrata (strain ATCC 2001 / BCRC 20586 / JCM 3761 / NBRC 0622 / NRRL Y-65 / CBS 138) (Yeast).